Reading from the N-terminus, the 495-residue chain is Glucose-6-phosphate 1-dehydrogenase (495 aa).

Ser1 carries the post-translational modification N-acetylserine. Residues 15–22, Arg49, and Lys149 each bind NADP(+); that span reads GASGDLAR. D-glucose 6-phosphate is bound by residues Lys149, 179 to 183, Glu217, and Asp236; that span reads HYLGK. The Proton acceptor role is filled by His241. Arg332 is an NADP(+) binding site. D-glucose 6-phosphate is bound at residue Lys335. Positions 341, 345, and 367 each coordinate NADP(+). Residue Gln369 participates in D-glucose 6-phosphate binding. Residues 375–377, 395–397, and Lys463 each bind NADP(+); these read YLK and DLT.

Belongs to the glucose-6-phosphate dehydrogenase family.

The enzyme catalyses D-glucose 6-phosphate + NADP(+) = 6-phospho-D-glucono-1,5-lactone + NADPH + H(+). It participates in carbohydrate degradation; pentose phosphate pathway; D-ribulose 5-phosphate from D-glucose 6-phosphate (oxidative stage): step 1/3. Functionally, catalyzes the rate-limiting step of the oxidative pentose-phosphate pathway, which represents a route for the dissimilation of carbohydrates besides glycolysis. The main function of this enzyme is to provide reducing power (NADPH) and pentose phosphates for fatty acid and nucleic acid synthesis. In Cyberlindnera jadinii (Torula yeast), this protein is Glucose-6-phosphate 1-dehydrogenase.